A 628-amino-acid polypeptide reads, in one-letter code: Exonuclease V, mitochondrial (628 aa).

A mitochondrion-targeting transit peptide spans 1–21; the sequence is MSRFWHFKKFYFTSCYSMQRM. A disordered region spans residues 37–58; sequence TSEHEQVQSISKEESRSLSSND. The span at 38–52 shows a compositional bias: basic and acidic residues; it reads SEHEQVQSISKEESR. Residues cysteine 164, cysteine 586, cysteine 589, and cysteine 595 each coordinate [4Fe-4S] cluster.

Belongs to the EXO5 family. Monomer. The cofactor is Mg(2+). [4Fe-4S] cluster is required as a cofactor.

It localises to the mitochondrion. Its function is as follows. Single strand DNA specific 5' exonuclease involved in mitochondrial DNA replication and recombination. Releases dinucleotides as main products of catalysis. Has the capacity to slide across 5'double-stranded DNA or 5'RNA sequences and resumes cutting two nucleotides downstream of the double-stranded-to-single-stranded junction or RNA-to-DNA junction, respectively. The chain is Exonuclease V, mitochondrial (DEM1) from Candida albicans (strain SC5314 / ATCC MYA-2876) (Yeast).